Here is a 150-residue protein sequence, read N- to C-terminus: Heavy metal-associated isoprenylated plant protein 24 (150 aa).

The 64-residue stretch at Gln26 to Glu89 folds into the HMA domain. 2 residues coordinate a metal cation: Cys37 and Cys40. Residue Cys147 is modified to Cysteine methyl ester. The S-farnesyl cysteine moiety is linked to residue Cys147. A propeptide spans Ala148 to Met150 (removed in mature form).

This sequence belongs to the HIPP family. Interacts with ZHD11/HB29.

Heavy-metal-binding protein. The sequence is that of Heavy metal-associated isoprenylated plant protein 24 from Arabidopsis thaliana (Mouse-ear cress).